The following is a 400-amino-acid chain: Mu-type opioid receptor (400 aa).

Over 1 to 68 the chain is Extracellular; sequence MDSSAVPANA…CPPTGSPSMI (68 aa). 5 N-linked (GlcNAc...) asparagine glycosylation sites follow: N9, N12, N33, N40, and N48. A helical membrane pass occupies residues 69–93; that stretch reads TAITIMALYSIVCVVGLFGNFLVMY. Over 94–106 the chain is Cytoplasmic; the sequence is VIVRYTKMKTATN. A helical membrane pass occupies residues 107-131; the sequence is IYIFNLALADALATSTLPFQSVNYL. Over 132 to 142 the chain is Extracellular; sequence MGTWPFGTILC. A disulfide bridge connects residues C142 and C219. The chain crosses the membrane as a helical span at residues 143–165; that stretch reads KIVISIDYYNMFTSIFTLCTMSV. Residues 166 to 185 lie on the Cytoplasmic side of the membrane; the sequence is DRYIAVCHPVKALDFRTPRN. A Phosphotyrosine modification is found at Y168. A helical transmembrane segment spans residues 186 to 207; it reads AKIVNVCNWIISSAIGLPVMFM. The Extracellular segment spans residues 208-230; the sequence is ATTKYRQGSIDCTLTFSHPTWYW. A helical membrane pass occupies residues 231–255; sequence ENLLKICVFIFAFIMPVLIITVCYG. At 256–279 the chain is on the cytoplasmic side; it reads LMILRLKSVRMLSGSKEKDRNLRR. A helical membrane pass occupies residues 280 to 306; the sequence is ITRMVLVVVAVFIVCWTPIHIYVIIKA. The Extracellular portion of the chain corresponds to 307-314; that stretch reads LVTIPETT. A helical membrane pass occupies residues 315–338; that stretch reads FQTVSWHFCIALGYTNSCLNPVLY. Residues 334 to 338 carry the NPxxY; plays a role in stabilizing the activated conformation of the receptor motif; sequence NPVLY. At 339–400 the chain is on the cytoplasmic side; sequence AFLDENFKRC…NLEAETAPLP (62 aa). C353 is lipidated: S-palmitoyl cysteine. At S365 the chain carries Phosphoserine. At T372 the chain carries Phosphothreonine. At S377 the chain carries Phosphoserine. T396 is modified (phosphothreonine).

The protein belongs to the G-protein coupled receptor 1 family. In terms of assembly, forms homooligomers and heterooligomers with other GPCRs, such as OPRD1, OPRK1, OPRL1, NPFFR2, ADRA2A, SSTR2, CNR1 and CCR5 (probably in dimeric forms). Interacts with heterotrimeric G proteins; interaction with a heterotrimeric complex containing GNAI1, GNB1 and GNG2 stabilizes the active conformation of the receptor and increases its affinity for endomorphin-2, the synthetic opioid peptide DAMGO and for morphinan agonists. Interacts with PPL; the interaction disrupts agonist-mediated G-protein activation. Interacts (via C-terminus) with DNAJB4 (via C-terminus). Interacts with calmodulin; the interaction inhibits the constitutive activity of OPRM1; it abolishes basal and attenuates agonist-stimulated G-protein coupling. Interacts with FLNA, PLD2, RANBP9 and WLS and GPM6A. Interacts with RTP4. Interacts with SYP and GNAS. Interacts with RGS9, RGS17, RGS20, RGS4, PPP1R9B and HINT1. In terms of processing, phosphorylated. Differentially phosphorylated in basal and agonist-induced conditions. Agonist-mediated phosphorylation modulates receptor internalization. Phosphorylated by GRK2 in a agonist-dependent manner. Phosphorylation at Tyr-168 requires receptor activation, is dependent on non-receptor protein tyrosine kinase Src and results in a decrease in agonist efficacy by reducing G-protein coupling efficiency. Phosphorylated on tyrosine residues; the phosphorylation is involved in agonist-induced G-protein-independent receptor down-regulation. Phosphorylation at Ser-377 is involved in G-protein-dependent but not beta-arrestin-dependent activation of the ERK pathway. Ubiquitinated. A basal ubiquitination seems not to be related to degradation. Ubiquitination is increased upon formation of OPRM1:OPRD1 oligomers leading to proteasomal degradation; the ubiquitination is diminished by RTP4.

It localises to the cell membrane. The protein localises to the cell projection. Its subcellular location is the axon. The protein resides in the perikaryon. It is found in the dendrite. It localises to the endosome. Functionally, receptor for endogenous opioids such as beta-endorphin and endomorphin. Receptor for natural and synthetic opioids including morphine, heroin, DAMGO, fentanyl, etorphine, buprenorphin and methadone. Also activated by enkephalin peptides, such as Met-enkephalin or Met-enkephalin-Arg-Phe, with higher affinity for Met-enkephalin-Arg-Phe. Agonist binding to the receptor induces coupling to an inactive GDP-bound heterotrimeric G-protein complex and subsequent exchange of GDP for GTP in the G-protein alpha subunit leading to dissociation of the G-protein complex with the free GTP-bound G-protein alpha and the G-protein beta-gamma dimer activating downstream cellular effectors. The agonist- and cell type-specific activity is predominantly coupled to pertussis toxin-sensitive G(i) and G(o) G alpha proteins, GNAI1, GNAI2, GNAI3 and GNAO1, and to a lesser extent to pertussis toxin-insensitive G alpha proteins GNAZ and GNA15. They mediate an array of downstream cellular responses, including inhibition of adenylate cyclase activity and both N-type and L-type calcium channels, activation of inward rectifying potassium channels, mitogen-activated protein kinase (MAPK), phospholipase C (PLC), phosphoinositide/protein kinase (PKC), phosphoinositide 3-kinase (PI3K) and regulation of NF-kappa-B. Also couples to adenylate cyclase stimulatory G alpha proteins. The selective temporal coupling to G-proteins and subsequent signaling can be regulated by RGSZ proteins, such as RGS9, RGS17 and RGS4. Phosphorylation by members of the GPRK subfamily of Ser/Thr protein kinases and association with beta-arrestins is involved in short-term receptor desensitization. Beta-arrestins associate with the GPRK-phosphorylated receptor and uncouple it from the G-protein thus terminating signal transduction. The phosphorylated receptor is internalized through endocytosis via clathrin-coated pits which involves beta-arrestins. The activation of the ERK pathway occurs either in a G-protein-dependent or a beta-arrestin-dependent manner and is regulated by agonist-specific receptor phosphorylation. Acts as a class A G-protein coupled receptor (GPCR) which dissociates from beta-arrestin at or near the plasma membrane and undergoes rapid recycling. Receptor down-regulation pathways are varying with the agonist and occur dependent or independent of G-protein coupling. Endogenous ligands induce rapid desensitization, endocytosis and recycling. Heterooligomerization with other GPCRs can modulate agonist binding, signaling and trafficking properties. Involved in neurogenesis. The sequence is that of Mu-type opioid receptor (OPRM1) from Saimiri boliviensis boliviensis (Bolivian squirrel monkey).